A 314-amino-acid chain; its full sequence is Ribosomal RNA small subunit methyltransferase H (314 aa).

S-adenosyl-L-methionine is bound by residues 36-38 (GGH), aspartate 56, phenylalanine 81, aspartate 103, and glutamine 110.

The protein belongs to the methyltransferase superfamily. RsmH family.

It is found in the cytoplasm. The catalysed reaction is cytidine(1402) in 16S rRNA + S-adenosyl-L-methionine = N(4)-methylcytidine(1402) in 16S rRNA + S-adenosyl-L-homocysteine + H(+). In terms of biological role, specifically methylates the N4 position of cytidine in position 1402 (C1402) of 16S rRNA. This chain is Ribosomal RNA small subunit methyltransferase H, found in Shewanella sediminis (strain HAW-EB3).